An 883-amino-acid polypeptide reads, in one-letter code: Putative GTP diphosphokinase RSH1, chloroplastic (883 aa).

A chloroplast-targeting transit peptide spans 1–55 (MTSASSMSVSVECVNICNLTKGDGNARSDCSALSCAWKAPRALTGFLASTAHPPV). The region spanning 172 to 279 (FIIHPVAVAR…VKLADRLHNM (108 aa)) is the HD domain. A TGS domain is found at 562–625 (LGSRVFVFTP…ENAEVVEIVT (64 aa)). A compositionally biased stretch (polar residues) spans 710–726 (QSQDKSRDTTPAPQNGS). Residues 710–746 (QSQDKSRDTTPAPQNGSVWAPKVNGKHNKAIKNSSSD) form a disordered region. Positions 796–867 (WLCVVSMDRK…LVLGVLGWSS (72 aa)) constitute an ACT domain.

It belongs to the RelA/SpoT family. As to quaternary structure, interacts with RPP5.

Its subcellular location is the plastid. It localises to the chloroplast. It catalyses the reaction GTP + ATP = guanosine 3'-diphosphate 5'-triphosphate + AMP. May be involved in a rapid plant ppGpp (guanosine 3'-diphosphate 5'-diphosphate)-mediated response to pathogens and other stresses. The protein is Putative GTP diphosphokinase RSH1, chloroplastic (RSH1) of Arabidopsis thaliana (Mouse-ear cress).